The primary structure comprises 289 residues: Nucleotide-binding protein LAF_0356 (289 aa).

12–19 (GMSGAGKT) is a binding site for ATP. 62-65 (DSRS) is a binding site for GTP.

It belongs to the RapZ-like family.

Displays ATPase and GTPase activities. This chain is Nucleotide-binding protein LAF_0356, found in Limosilactobacillus fermentum (strain NBRC 3956 / LMG 18251) (Lactobacillus fermentum).